Here is a 321-residue protein sequence, read N- to C-terminus: Fructose-1,6-bisphosphatase 2 class 2 (321 aa).

Mn(2+) contacts are provided by aspartate 32, glutamate 56, aspartate 84, and glutamate 87. Residues 87–89 (EGT), tyrosine 118, 163–165 (KPR), 185–187 (DGD), and glycine 209 each bind substrate. Glutamate 212 contributes to the Mn(2+) binding site.

This sequence belongs to the FBPase class 2 family. Homodimer. Requires Mn(2+) as cofactor.

The catalysed reaction is beta-D-fructose 1,6-bisphosphate + H2O = beta-D-fructose 6-phosphate + phosphate. Its activity is regulated as follows. Competitively inhibited by low concentrations of phosphate (IC50 of 1.2 mM) and is also sensitive to Li(+) (IC50 of 15.8 mM). Also inhibited by 1 mM ATP or 50 mM KCl (60% and 20% residual activity, respectively). Slightly activated (40-50%) by the addition of 1 mM dithiothreitol in vitro. Catalyzes the hydrolysis of fructose 1,6-bisphosphate to fructose 6-phosphate. Also displays a low activity toward glucose 1,6-bisphosphate, and no activity against ribulose 1,5-bisphosphate, fructose 2,6-bisphosphate, or fructose 1-phosphate. The chain is Fructose-1,6-bisphosphatase 2 class 2 (yggF) from Escherichia coli (strain K12).